A 586-amino-acid polypeptide reads, in one-letter code: MRKTKIVCTIGPASESPELLEQLIEAGMNVARLNFSHGNHAEHKARIDSIRKVAREKGKVVGILLDTKGPEIRTHSMMNGKLELVTGQKIDISMTQVEGNNDVFSVSYDKLIEDVNEGSVILLDDGLIQLEVTGKDVARGLIHTLIINSGSLSNNKGVNIPGVSVQLPGMTEKDAEDILFGIREGVDFIAASFVRRASDVMEIRALLENNNGSNLQIIPKIENQEGVDNIDEILNVSDGLMVARGDLGVEIPPEEVPLVQKNLIEKCNQAGKPVITATQMLDSMQRNPRPTRAEASDVANAIFDGTDAIMLSGETAAGIYPVESVQTMDRIALTTEAAIDYRSVVSTRRREKHGNMTEAIGQAAAYTAINLKVKAVLAPTESGHTAKMIAKYRPGCPVIAVTSSEMCSRKLSLIWGVYPIVGKKASSIDEILQESVEESVKHQYVGHGDVVIITAGVPVGEAGTTNLMKIHVIGDLLARGQGIGKDVAYGRTVVAKNAAEALAYDTEGAILVTNASDRDMMPAIEKCAGLITEEGGLTSHGAIVGLSLGIPIIVGVENATELIQHGKEITMDAESGVIYNGHASVL.

Arg32 is a substrate binding site. Residues Asn34, Ser36, Asp66, and Thr67 each coordinate K(+). 34-37 lines the ATP pocket; the sequence is NFSH. Residues Arg73 and Lys156 each contribute to the ATP site. Position 222 (Glu222) interacts with Mg(2+). Positions 245, 246, and 278 each coordinate substrate. Asp246 contacts Mg(2+).

This sequence belongs to the pyruvate kinase family. In the C-terminal section; belongs to the PEP-utilizing enzyme family. Homotetramer. Requires Mg(2+) as cofactor. K(+) is required as a cofactor.

It carries out the reaction pyruvate + ATP = phosphoenolpyruvate + ADP + H(+). The protein operates within carbohydrate degradation; glycolysis; pyruvate from D-glyceraldehyde 3-phosphate: step 5/5. The protein is Pyruvate kinase (pyk) of Sporosarcina psychrophila (Bacillus psychrophilus).